A 364-amino-acid chain; its full sequence is Medium-wave-sensitive opsin 1 (364 aa).

A disordered region spans residues 1–24 (MAQRWDPQRLAGGQPQDSHEDSTQ). Over 1–52 (MAQRWDPQRLAGGQPQDSHEDSTQSSIFTYTNSNATRGPFEGPNYHIAPRWV) the chain is Extracellular. The segment at 17–43 (DSHEDSTQSSIFTYTNSNATRGPFEGP) is required for 11-cis-retinal regeneration. Residue N34 is glycosylated (N-linked (GlcNAc...) asparagine). Residues 53–77 (YHITSTWMIIVVIASVFTNGLVLVA) form a helical membrane-spanning segment. Over 78–89 (TMKFKKLRHPLN) the chain is Cytoplasmic. A helical transmembrane segment spans residues 90–115 (WILVNLAIADLAETVIASTISVVNQL). The Extracellular portion of the chain corresponds to 116–129 (YGYFVLGHPLCVVE). Residues C126 and C203 are joined by a disulfide bond. The chain crosses the membrane as a helical span at residues 130-149 (GYTVSVCGITGLWSLAIISW). Over 150-168 (ERWLVVCKPFGNMRFDAKL) the chain is Cytoplasmic. A helical membrane pass occupies residues 169–192 (AIVGIAFSWIWSAVWTAPPIFGWS). Topologically, residues 193 to 218 (RYWPYGLKTSCGPDVFSGTSYPGVQS) are extracellular. Residues 219–246 (YMMVLMVTCCIIPLSIIILCYLQVWLAI) form a helical membrane-spanning segment. At 247 to 268 (RAVAKQQKESESTQKAEKEVTR) the chain is on the cytoplasmic side. Residues 269–292 (MVVVMVFAYCLCWGPYTFFACFAT) form a helical membrane-spanning segment. Topologically, residues 293 to 300 (ANPGYAFH) are extracellular. A helical transmembrane segment spans residues 301 to 320 (PLVAALPAYFAKSATIYNPI). K312 bears the N6-(retinylidene)lysine mark. Residues 321 to 364 (IYVFMNRQFRNCILQLFGKKVDDTSELSSASKTEASSVSSVSPA) lie on the Cytoplasmic side of the membrane.

Belongs to the G-protein coupled receptor 1 family. Opsin subfamily. Monomer. Homodimer. Homotetramer. Post-translationally, O-glycosylated. Phosphorylated on some or all of the serine and threonine residues present in the C-terminal region. In terms of tissue distribution, expressed in cone photoreceptor cells.

The protein resides in the membrane. Functionally, visual pigments are the light-absorbing molecules that mediate vision. They consist of an apoprotein, opsin, covalently linked to cis-retinal. May increase spectral sensitivity in dim light. This chain is Medium-wave-sensitive opsin 1 (OPN1MW), found in Sciurus carolinensis (Eastern gray squirrel).